Consider the following 189-residue polypeptide: Chitin synthase 2 (189 aa).

The protein belongs to the chitin synthase family. Class II subfamily.

The protein resides in the cell membrane. It carries out the reaction [(1-&gt;4)-N-acetyl-beta-D-glucosaminyl](n) + UDP-N-acetyl-alpha-D-glucosamine = [(1-&gt;4)-N-acetyl-beta-D-glucosaminyl](n+1) + UDP + H(+). In terms of biological role, polymerizes chitin, a structural polymer of the cell wall and septum, by transferring the sugar moiety of UDP-GlcNAc to the non-reducing end of the growing chitin polymer. This chain is Chitin synthase 2 (CHS2), found in Ajellomyces dermatitidis (Blastomyces dermatitidis).